We begin with the raw amino-acid sequence, 486 residues long: Argininosuccinate lyase (486 aa).

It belongs to the lyase 1 family. Argininosuccinate lyase subfamily.

It is found in the cytoplasm. It carries out the reaction 2-(N(omega)-L-arginino)succinate = fumarate + L-arginine. It participates in amino-acid biosynthesis; L-arginine biosynthesis; L-arginine from L-ornithine and carbamoyl phosphate: step 3/3. The polypeptide is Argininosuccinate lyase (Acidobacterium capsulatum (strain ATCC 51196 / DSM 11244 / BCRC 80197 / JCM 7670 / NBRC 15755 / NCIMB 13165 / 161)).